The chain runs to 199 residues: Peroxiredoxin 2 (199 aa).

One can recognise a Thioredoxin domain in the interval 1–152 (MGQKAPDFTV…IIRVIKALQF (152 aa)). The active-site Cysteine sulfenic acid (-SOH) intermediate is the C40. Substrate is bound at residue R115.

Belongs to the peroxiredoxin family. Prx6 subfamily. In terms of assembly, homodecamer. Pentamer of dimers that assemble into a ring structure.

Its subcellular location is the cytoplasm. It carries out the reaction a hydroperoxide + [thioredoxin]-dithiol = an alcohol + [thioredoxin]-disulfide + H2O. Its function is as follows. Thiol-specific peroxidase that catalyzes the reduction of hydrogen peroxide and organic hydroperoxides to water and alcohols, respectively. Plays a role in cell protection against oxidative stress by detoxifying peroxides. In Thermoplasma acidophilum (strain ATCC 25905 / DSM 1728 / JCM 9062 / NBRC 15155 / AMRC-C165), this protein is Peroxiredoxin 2.